A 64-amino-acid chain; its full sequence is MQWLADYWWIILILLVGMILNGIKELRRLDHKRFLDNKPELPPHRDNNAQWDDEDDWPDQNKKK.

The chain crosses the membrane as a helical span at residues 3 to 23 (WLADYWWIILILLVGMILNGI). The segment covering 36–47 (DNKPELPPHRDN) has biased composition (basic and acidic residues). Residues 36–64 (DNKPELPPHRDNNAQWDDEDDWPDQNKKK) form a disordered region.

Belongs to the UPF0370 family.

It is found in the cell membrane. In Yersinia pestis bv. Antiqua (strain Antiqua), this protein is UPF0370 protein YPA_2246.